The sequence spans 446 residues: Packaging protein 1 (446 aa).

The segment covering 1 to 10 has biased composition (basic residues); that stretch reads METRGRRRAF. Residues 1–74 form a disordered region; that stretch reads METRGRRRAF…PSQPPQPRSL (74 aa). 170–177 contacts ATP; sequence GPTGCGKS. A DNA-binding region spans residues 439–446; that stretch reads RAYRKRNK.

The protein belongs to the adenoviridae packaging protein 1 family. In terms of assembly, homodimer. Part of a genome packaging complex composed of packaging proteins 1, 2 and 3; this complex specifically binds to the packaging sequence on the left end of viral genomic DNA and performs packaging of the viral genome. Interacts with protein 33K.

Its subcellular location is the virion. The protein localises to the host nucleus. It is found in the host nucleoplasm. The protein resides in the host nucleolus. In terms of biological role, component of the packaging machinery which encapsidates the viral DNA into preformed capsids and transcriptional activator of the viral major late promoter (MLP). Binds, along with packaging proteins 2 and 3, to the specific packaging sequence on the left end of viral genomic DNA and displays ATPase activity thereby providing the power stroke of the packaging machinery. The activity of packaging protein IVa2 is stimulated by protein 33K which acts as a terminase. May be the protein that pumps DNA into the capsid powered by ATP hydrolysis. Specifically binds to the 5'-CG-3' nucleotides of the repeats making up the packaging sequence. Component of the DEF-A and DEF-B transcription factors that bind downstream elements of the major late promoter (MLP), and stimulate transcription from the MLP after initiation of viral DNA replication. DEF-A is a heterodimer packaging proteins 1 and 2 and DEF-B is a homodimer of packaging protein 1. In Human adenovirus F serotype 40 (HAdV-40), this protein is Packaging protein 1.